Consider the following 200-residue polypeptide: MELMVKGADALTVSETTFGREFNEALVHQVVVAYAAGARQGTRAQKTRSEVSGGGAKPWRQKGTGRARAGTIRSPIWRTGGVTFAAKPQDHSQKVNKKMYRGAMKSILSELVRQERLIVVDNFSVEAPKTKELVAKLKELELTDALIVTSEVDENLFLAARNLYKVDARDVAGIDPVSLIAFDKVVMTAEAVKQVEEMLA.

The tract at residues T42–G65 is disordered.

The protein belongs to the universal ribosomal protein uL4 family. As to quaternary structure, part of the 50S ribosomal subunit.

Functionally, one of the primary rRNA binding proteins, this protein initially binds near the 5'-end of the 23S rRNA. It is important during the early stages of 50S assembly. It makes multiple contacts with different domains of the 23S rRNA in the assembled 50S subunit and ribosome. Forms part of the polypeptide exit tunnel. This chain is Large ribosomal subunit protein uL4, found in Vibrio parahaemolyticus serotype O3:K6 (strain RIMD 2210633).